The following is a 485-amino-acid chain: NADH-quinone oxidoreductase subunit N (485 aa).

A run of 14 helical transmembrane segments spans residues 8–28 (LIAL…MLSI), 35–55 (FLNA…LWFV), 71–91 (GFAM…CTFA), 105–125 (FYLL…ANHL), 127–147 (SLFL…GYAF), 159–179 (YTIL…LVYA), 203–223 (LLAG…LVPF), 235–255 (PAPV…GVVM), 271–291 (VVLA…ALSQ), 297–317 (LLGY…IALQ), 326–346 (VGVY…VVSL), 373–393 (AAVM…LGFI), 408–430 (WWLV…RVAV), and 455–475 (IVVL…QPLI).

It belongs to the complex I subunit 2 family. In terms of assembly, NDH-1 is composed of 13 different subunits. Subunits NuoA, H, J, K, L, M, N constitute the membrane sector of the complex.

It is found in the cell inner membrane. The enzyme catalyses a quinone + NADH + 5 H(+)(in) = a quinol + NAD(+) + 4 H(+)(out). Its function is as follows. NDH-1 shuttles electrons from NADH, via FMN and iron-sulfur (Fe-S) centers, to quinones in the respiratory chain. The immediate electron acceptor for the enzyme in this species is believed to be ubiquinone. Couples the redox reaction to proton translocation (for every two electrons transferred, four hydrogen ions are translocated across the cytoplasmic membrane), and thus conserves the redox energy in a proton gradient. The sequence is that of NADH-quinone oxidoreductase subunit N from Shigella sonnei (strain Ss046).